A 229-amino-acid chain; its full sequence is 2-C-methyl-D-erythritol 4-phosphate cytidylyltransferase (229 aa).

Belongs to the IspD/TarI cytidylyltransferase family. IspD subfamily.

It carries out the reaction 2-C-methyl-D-erythritol 4-phosphate + CTP + H(+) = 4-CDP-2-C-methyl-D-erythritol + diphosphate. It participates in isoprenoid biosynthesis; isopentenyl diphosphate biosynthesis via DXP pathway; isopentenyl diphosphate from 1-deoxy-D-xylulose 5-phosphate: step 2/6. Catalyzes the formation of 4-diphosphocytidyl-2-C-methyl-D-erythritol from CTP and 2-C-methyl-D-erythritol 4-phosphate (MEP). The protein is 2-C-methyl-D-erythritol 4-phosphate cytidylyltransferase of Bacillus pumilus (strain SAFR-032).